The following is a 1041-amino-acid chain: Leucine-rich repeat receptor-like protein kinase TDR (1041 aa).

The N-terminal stretch at 1–29 is a signal peptide; the sequence is MKKKNISPSLVLHPLLLLLLPFFAFNSLA. The Extracellular segment spans residues 30 to 652; it reads LKFSPQLLSL…HHKEERPKKT (623 aa). The cysteines at positions 69 and 76 are disulfide-linked. N-linked (GlcNAc...) asparagine glycans are attached at residues Asn78, Asn92, and Asn111. 21 LRR repeats span residues 80 to 104, 105 to 128, 130 to 152, 154 to 176, 177 to 199, 200 to 224, 225 to 248, 250 to 272, 273 to 296, 297 to 319, 321 to 344, 345 to 368, 369 to 392, 394 to 416, 418 to 439, 440 to 464, 466 to 488, 511 to 535, 536 to 558, 559 to 583, and 585 to 607; these read TAQVISLDLSHRNLSGRIPIQIRYL, SSLLYLNLSGNSLEGSFPTSIFDL, KLTTLDISRNSFDSSFPPGISKL, FLKVFNAFSNNFEGLLPSDVSRL, RFLEELNFGGSYFEGEIPAAYGG, LQRLKFIHLAGNVLGGKLPPRLGLL, TELQHMEIGYNHFNGNIPSEFALL, NLKYFDVSNCSLSGSLPQELGNL, SNLETLFLFQNGFTGEIPESYSNL, KSLKLLDFSSNQLSGSIPSGFST, KNLTWLSLISNNLSGEVPEGIGEL, PELTTLFLWNNNFTGVLPHKLGSN, GKLETMDVSNNSFTGTIPSSLCHG, KLYKLILFSNMFEGELPKSLTRC, SLWRFRSQNNRLNGTIPIGFGS, LRNLTFVDLSNNRFTDQIPADFATA, VLQYLNLSTNFFHRKLPENIWKA, CKSFYRIELQGNSLNGTIPWDIGHC, EKLLCLNLSQNHLNGIIPWEIST, LPSIADVDLSHNLLTGTIPSDFGSS, and TITTFNVSYNQLIGPIPSGSFAH. Residues 186–188 form a CLE peptide binding region; that stretch reads GSY. Residues 233–235 form a CLE peptide binding region; that stretch reads GYN. Residues Asn258 and Asn271 are each glycosylated (N-linked (GlcNAc...) asparagine). A CLE peptide binding region spans residues 303 to 307; that stretch reads DFSSN. 3 N-linked (GlcNAc...) asparagine glycosylation sites follow: Asn322, Asn332, and Asn356. Residues 375 to 377 form a CLE peptide binding region; it reads DVS. N-linked (GlcNAc...) asparagine glycosylation is present at Asn378. Cysteines 390 and 416 form a disulfide. Residues 421-423 are CLE peptide binding; sequence RFR. N-linked (GlcNAc...) asparagine glycosylation is found at Asn430, Asn442, Asn471, Asn525, and Asn542. Cys511 and Cys535 form a disulfide bridge. An N-linked (GlcNAc...) asparagine glycan is attached at Asn590. An intrachain disulfide couples Cys620 to Cys628. Residues 653 to 673 form a helical membrane-spanning segment; it reads AGAIVWILAAAIGVGFFVLVA. Topologically, residues 674–1041 are cytoplasmic; that stretch reads ATRCFQKSYG…HDVKCQRIGV (368 aa). Position 710 is a phosphothreonine (Thr710). Residues 719–1001 form the Protein kinase domain; the sequence is SKTDNILGMG…DVLLILQEAK (283 aa). ATP contacts are provided by residues 725–733 and Lys747; that span reads LGMGSTGTV. Tyr798 and Tyr839 each carry phosphotyrosine. Asp852 acts as the Proton acceptor in catalysis. Phosphoserine is present on Ser884. Phosphotyrosine occurs at positions 892 and 899. Thr900 carries the post-translational modification Phosphothreonine.

Belongs to the protein kinase superfamily. Ser/Thr protein kinase family. As to quaternary structure, interacts specifically with the mature peptides CLE41p and CLE44p, especially in the presence of SERK2. Interacts with LURE1.2. In terms of tissue distribution, widely expressed along the vascular strands. In roots and hypocotyls, confined to procambial cells.

Its subcellular location is the cell membrane. It catalyses the reaction L-seryl-[protein] + ATP = O-phospho-L-seryl-[protein] + ADP + H(+). The enzyme catalyses L-threonyl-[protein] + ATP = O-phospho-L-threonyl-[protein] + ADP + H(+). Functionally, acts with CLE41p and CLE44p peptides as a ligand-receptor pair in a signal transduction pathway involved in the regulation of procambium maintenance and polarity during vascular-tissue development. Mediates repression of tracheary element differentiation and the promotion of procambial cells formation and polar division adjacent to phloem cells in the veins. This is Leucine-rich repeat receptor-like protein kinase TDR from Arabidopsis thaliana (Mouse-ear cress).